The following is a 249-amino-acid chain: RNA-free ribonuclease P (249 aa).

The tract at residues 226–249 is disordered; that stretch reads NENEPEYENRDKSKEGSSGEIEFI. Positions 232–242 are enriched in basic and acidic residues; sequence YENRDKSKEGS.

This sequence belongs to the HARP family.

It carries out the reaction Endonucleolytic cleavage of RNA, removing 5'-extranucleotides from tRNA precursor.. Functionally, RNA-free RNase P that catalyzes the removal of the 5'-leader sequence from pre-tRNA to produce the mature 5'-terminus. In Methanosarcina barkeri (strain Fusaro / DSM 804), this protein is RNA-free ribonuclease P.